A 180-amino-acid chain; its full sequence is MILSDRSIRELIEKGELKVEPYEPSHVQCSSLDLRLGNQIALYEGEGVIDVKKGTKGVRILEFEEYFDIMPKQFLLATTLEYISLPPYVTAFVEGRSSLGRLGLFIENAGWVDAGFEGQITLELFNANDRPIRLYRGMRICQLVFARLDRPPERVYSGKYKGQKGVVPSRIHMDEELKSE.

DCTP-binding positions include 96 to 101, Asp-113, 121 to 123, Gln-142, Tyr-156, and Gln-163; these read RSSLGR and TLE. Glu-123 functions as the Proton donor/acceptor in the catalytic mechanism.

This sequence belongs to the dCTP deaminase family. As to quaternary structure, homotrimer.

The enzyme catalyses dCTP + 2 H2O = dUMP + NH4(+) + diphosphate. The protein operates within pyrimidine metabolism; dUMP biosynthesis; dUMP from dCTP: step 1/1. In terms of biological role, bifunctional enzyme that catalyzes both the deamination of dCTP to dUTP and the hydrolysis of dUTP to dUMP without releasing the toxic dUTP intermediate. The chain is dCTP deaminase, dUMP-forming from Aquifex aeolicus (strain VF5).